A 77-amino-acid polypeptide reads, in one-letter code: uncharacterized protein (77 aa).

A helical membrane pass occupies residues 36 to 52 (FYQLILKVLSALLLLSV).

It localises to the membrane. This is an uncharacterized protein from Saccharomyces cerevisiae (strain ATCC 204508 / S288c) (Baker's yeast).